The following is a 322-amino-acid chain: ATP-dependent 6-phosphofructokinase (322 aa).

Residues Gly12, 73-74 (RF), and 103-106 (GDGT) contribute to the ATP site. Asp104 serves as a coordination point for Mg(2+). A substrate-binding site is contributed by 126-128 (TID). Asp128 acts as the Proton acceptor in catalysis. ADP is bound at residue Arg155. Substrate-binding positions include Arg163 and 170–172 (MGR). Residues 186 to 188 (GSE), Lys212, and 214 to 216 (KPS) contribute to the ADP site. Substrate contacts are provided by residues Glu223, Arg245, and 251-254 (HTQR).

Belongs to the phosphofructokinase type A (PFKA) family. ATP-dependent PFK group I subfamily. Prokaryotic clade 'B1' sub-subfamily. As to quaternary structure, homotetramer. Mg(2+) serves as cofactor.

The protein localises to the cytoplasm. The catalysed reaction is beta-D-fructose 6-phosphate + ATP = beta-D-fructose 1,6-bisphosphate + ADP + H(+). Its pathway is carbohydrate degradation; glycolysis; D-glyceraldehyde 3-phosphate and glycerone phosphate from D-glucose: step 3/4. With respect to regulation, allosterically activated by ADP and other diphosphonucleosides, and allosterically inhibited by phosphoenolpyruvate. Its function is as follows. Catalyzes the phosphorylation of D-fructose 6-phosphate to fructose 1,6-bisphosphate by ATP, the first committing step of glycolysis. The sequence is that of ATP-dependent 6-phosphofructokinase from Mesomycoplasma hyopneumoniae (strain J / ATCC 25934 / NCTC 10110) (Mycoplasma hyopneumoniae).